Reading from the N-terminus, the 309-residue chain is Taste receptor type 2 member 46 (309 aa).

A topological domain (extracellular) is located at residue M1. The chain crosses the membrane as a helical span at residues 2–22 (ITFLPIIFSILIVVTFVIGNF). Over 23 to 46 (ANGFIALANSIEWFKRQKISFADQ) the chain is Cytoplasmic. The chain crosses the membrane as a helical span at residues 47-67 (ILTALAVSRVGLLWVLLLNWY). The Extracellular segment spans residues 68–86 (ATELNPAFYSIEVRITAYN). A helical membrane pass occupies residues 87–107 (VWAVISHFSNWLATSLSIFYL). Residues 108–126 (LKIANFSNLIFLRLKRRVK) are Cytoplasmic-facing. A helical membrane pass occupies residues 127 to 147 (SVVLVILLGPLLFLVCHLFVI). Topologically, residues 148–178 (NMNQIIWTKEYEGNMTWKIKLRSAMYLSDTT) are extracellular. A glycan (N-linked (GlcNAc...) asparagine) is linked at N161. Residues 179 to 199 (VTILANLVPFTLTLISFLLLI) form a helical membrane-spanning segment. Residues 200-229 (CSLCKHLKKMQLHGKGSQDPSMKVHIKALQ) lie on the Cytoplasmic side of the membrane. Residues 230-250 (TVTSFLLLCAIYFLSVIMSVW) form a helical membrane-spanning segment. Residues 251–259 (SFESLENKP) lie on the Extracellular side of the membrane. Residues 260-280 (VFMFCEAITFSYPSTHPFILI) traverse the membrane as a helical segment. Over 281–309 (WGNKKLKQTFLSVLWHVRYWVKGEKPSSS) the chain is Cytoplasmic.

This sequence belongs to the G-protein coupled receptor T2R family.

It is found in the membrane. It localises to the cell projection. The protein localises to the cilium membrane. Its function is as follows. Receptor that may play a role in the perception of bitterness and is gustducin-linked. May play a role in sensing the chemical composition of the gastrointestinal content. The activity of this receptor may stimulate alpha gustducin, mediate PLC-beta-2 activation and lead to the gating of TRPM5. In airway epithelial cells, binding of bitter compounds increases the intracellular calcium ion concentration and stimulates ciliary beat frequency. This is Taste receptor type 2 member 46 (TAS2R46) from Gorilla gorilla gorilla (Western lowland gorilla).